The primary structure comprises 274 residues: Large ribosomal subunit protein uL2 (274 aa).

The tract at residues 197–274 (NSDHALEKSG…SKYIIERRKK (78 aa)) is disordered. Composition is skewed to basic residues over residues 207–220 (KAGR…RPHN) and 244–274 (PRSR…RRKK).

The protein belongs to the universal ribosomal protein uL2 family. Part of the 50S ribosomal subunit. Forms a bridge to the 30S subunit in the 70S ribosome.

In terms of biological role, one of the primary rRNA binding proteins. Required for association of the 30S and 50S subunits to form the 70S ribosome, for tRNA binding and peptide bond formation. It has been suggested to have peptidyltransferase activity; this is somewhat controversial. Makes several contacts with the 16S rRNA in the 70S ribosome. This is Large ribosomal subunit protein uL2 from Porphyromonas gingivalis (strain ATCC BAA-308 / W83).